Reading from the N-terminus, the 230-residue chain is 2,3-bisphosphoglycerate-dependent phosphoglycerate mutase (230 aa).

Substrate is bound by residues 8–15 (RHGQSIWN), 21–22 (TG), arginine 60, 87–90 (ERHY), lysine 98, and 114–115 (RR). The active-site Tele-phosphohistidine intermediate is the histidine 9. Glutamate 87 serves as the catalytic Proton donor/acceptor. The tract at residues 117-143 (YDTPPPALDAEDERHPRHDPRYAGLDP) is disordered. Residues 128–137 (DERHPRHDPR) show a composition bias toward basic and acidic residues. 183–184 (GN) is a binding site for substrate.

It belongs to the phosphoglycerate mutase family. BPG-dependent PGAM subfamily. As to quaternary structure, homodimer.

The enzyme catalyses (2R)-2-phosphoglycerate = (2R)-3-phosphoglycerate. It functions in the pathway carbohydrate degradation; glycolysis; pyruvate from D-glyceraldehyde 3-phosphate: step 3/5. Functionally, catalyzes the interconversion of 2-phosphoglycerate and 3-phosphoglycerate. In Halorhodospira halophila (strain DSM 244 / SL1) (Ectothiorhodospira halophila (strain DSM 244 / SL1)), this protein is 2,3-bisphosphoglycerate-dependent phosphoglycerate mutase.